Consider the following 699-residue polypeptide: MFKALFGVLQKIGRALMLPVAILPAAGILLAIGNAMQNKDMIQVLHFLSNDNVQLVAGVMESAGQIVFDNLPLLFAVGVAIGLANGDGVAGIAAIIGYLVMNVSMSAVLLANGTIPSDSVERAKFFTENHPAYVNMLGIPTLATGVFGGIIVGVLAALLFNRFYTIELPQYLGFFAGKRFVPIVTSISALILGLIMLVIWPPIQHGLNAFSTGLVEANPTLAAFIFGVIERSLIPFGLHHIFYSPFWYEFFSYKSAAGEIIRGDQRIFMAQIKDGVQLTAGTFMTGKYPFMMFGLPAAALAIYHEAKPQNKKLVAGIMGSAALTSFLTGITEPLEFSFLFVAPVLFAIHCLFAGLSFMVMQLLNVKIGMTFSGGLIDYFLFGILPNRTAWWLVIPVGLGLAVIYYFGFRFAIRKFNLKTPGREDAAEETAAPGKTGEAGDLPYEILQAMGDQENIKHLDACITRLRVTVNDQKKVDKDRLKQLGASGVLEVGNNIQAIFGPRSDGLKTQMQDIIAGRKPRPEPKTSAQEEVGQQVEEVIAEPLQNEIGEEVFVSPITGEIHPITDVPDQVFSGKMMGDGFAILPSEGIVVSPVRGKILNVFPTKHAIGLQSDGGREILIHFGIDTVSLKGEGFTSFVSEGDRVEPGQKLLEVDLDAVKPNVPSLMTPIVFTNLAEGETVSIKASGSVNREQEDIVKIEK.

A PTS EIIC type-1 domain is found at 3–424; the sequence is KALFGVLQKI…FNLKTPGRED (422 aa). 11 helical membrane-spanning segments follow: residues 16 to 36, 66 to 86, 89 to 109, 139 to 159, 180 to 200, 233 to 253, 283 to 303, 313 to 333, 338 to 358, 365 to 385, and 388 to 408; these read LMLPVAILPAAGILLAIGNAM, IVFDNLPLLFAVGVAIGLANG, VAGIAAIIGYLVMNVSMSAVL, IPTLATGVFGGIIVGVLAALL, FVPIVTSISALILGLIMLVIW, LIPFGLHHIFYSPFWYEFFSY, FMTGKYPFMMFGLPAAALAIY, LVAGIMGSAALTSFLTGITEP, FLFVAPVLFAIHCLFAGLSFM, VKIGMTFSGGLIDYFLFGILP, and TAWWLVIPVGLGLAVIYYFGF. One can recognise a PTS EIIB type-1 domain in the interval 439-520; it reads GDLPYEILQA…QDIIAGRKPR (82 aa). Cysteine 461 serves as the catalytic Phosphocysteine intermediate; for EIIB activity. The PTS EIIA type-1 domain maps to 568-672; it reads DQVFSGKMMG…SLMTPIVFTN (105 aa). Histidine 620 functions as the Tele-phosphohistidine intermediate; for EIIA activity in the catalytic mechanism.

The protein resides in the cell membrane. The catalysed reaction is N(pros)-phospho-L-histidyl-[protein] + D-glucose(out) = D-glucose 6-phosphate(in) + L-histidyl-[protein]. It carries out the reaction D-glucosamine(out) + N(pros)-phospho-L-histidyl-[protein] = D-glucosamine 6-phosphate(in) + L-histidyl-[protein]. In terms of biological role, the phosphoenolpyruvate-dependent sugar phosphotransferase system (sugar PTS), a major carbohydrate active transport system, catalyzes the phosphorylation of incoming sugar substrates concomitantly with their translocation across the cell membrane. This system is involved in glucose transport. The system can also transport glucosamine. Its function is as follows. In addition, plays an important role in the phosphorylation of EIIA-deficient PTS transporters. The EIIA domain can transfer a phosphoryl group to EIIA-deficient PTS transporters, enabling growth with maltose, N-acetylglucosamine, sucrose or trehalose as the sole carbon source. The sequence is that of PTS system glucose-specific EIICBA component (ptsG) from Bacillus subtilis (strain 168).